We begin with the raw amino-acid sequence, 343 residues long: GTPase Obg (343 aa).

An Obg domain is found at 1-159 (MQFIDHATIC…RQLRLELKLL (159 aa)). Residues 160–328 (AEVGLIGLPN…LLRLVWQWLD (169 aa)) form the OBG-type G domain. GTP-binding positions include 166-173 (GLPNAGKS), 191-195 (FTTLV), 213-216 (DIPG), 280-283 (NKID), and 309-311 (SSA). 2 residues coordinate Mg(2+): serine 173 and threonine 193.

The protein belongs to the TRAFAC class OBG-HflX-like GTPase superfamily. OBG GTPase family. As to quaternary structure, monomer. Requires Mg(2+) as cofactor.

It localises to the cytoplasm. Functionally, an essential GTPase which binds GTP, GDP and possibly (p)ppGpp with moderate affinity, with high nucleotide exchange rates and a fairly low GTP hydrolysis rate. Plays a role in control of the cell cycle, stress response, ribosome biogenesis and in those bacteria that undergo differentiation, in morphogenesis control. The protein is GTPase Obg of Synechococcus elongatus (strain ATCC 33912 / PCC 7942 / FACHB-805) (Anacystis nidulans R2).